The sequence spans 199 residues: uncharacterized protein (199 aa).

It to M.jannaschii MJ1356.

This is an uncharacterized protein from Methanocaldococcus jannaschii (strain ATCC 43067 / DSM 2661 / JAL-1 / JCM 10045 / NBRC 100440) (Methanococcus jannaschii).